The sequence spans 307 residues: Probable protein S-acyltransferase 14 (307 aa).

Transmembrane regions (helical) follow at residues 22 to 42 (LGSI…YAVV) and 63 to 83 (ILIL…SVVF). Positions 127-177 (RFCRKCNQLKPSRCHHCSVCGRCVLKMDHHCVWVVNCVGALNYKYFLLFLF) constitute a DHHC domain. Cysteine 157 functions as the S-palmitoyl cysteine intermediate in the catalytic mechanism. 2 helical membrane-spanning segments follow: residues 171–191 (YFLL…LVLM) and 213–233 (TFLA…FLIM).

It belongs to the DHHC palmitoyltransferase family.

Its subcellular location is the golgi apparatus. It localises to the trans-Golgi network membrane. It catalyses the reaction L-cysteinyl-[protein] + hexadecanoyl-CoA = S-hexadecanoyl-L-cysteinyl-[protein] + CoA. Palmitoyl acyltransferase. The polypeptide is Probable protein S-acyltransferase 14 (PAT14) (Arabidopsis thaliana (Mouse-ear cress)).